Consider the following 261-residue polypeptide: MGSLPSRRKSLPSPSLSSSVQGQGPVTMEAERSKATAVALGSFPAGGPAELSLRLGEPLTIVSEDGDWWTVLSEVSGREYNIPSVHVAKVSHGWLYEGLSREKAEELLLLPGNPGGAFLIRESQTRRGSYSLSVRLSRPASWDRIRHYRIHCLDNGWLYISPRLTFPSLQALVDHYSELADDICCLLKEPCVLQRAGPLPGKDIPLPVTVQRTPLNWKELDSSLLFSEAATGEESLLSEGLRESLSFYISLNDEAVSLDDA.

The span at 1 to 10 (MGSLPSRRKS) shows a compositional bias: basic residues. The tract at residues 1–31 (MGSLPSRRKSLPSPSLSSSVQGQGPVTMEAE) is disordered. Glycine 2 is lipidated: N-myristoyl glycine. The SH3 domain occupies 32-92 (RSKATAVALG…PSVHVAKVSH (61 aa)). Residues 94–191 (WLYEGLSREK…DICCLLKEPC (98 aa)) enclose the SH2 domain. Positions 195 to 261 (RAGPLPGKDI…NDEAVSLDDA (67 aa)) are SLA C-terminal.

Interacts (via SH2 domain) with ZAP70 (phosphorylated) and CD3Z (phosphorylated). Interacts (via SH2 domain) with CSF1R (phosphorylated). Interacts (via its C-terminal domain) with CBL (phosphorylated). Phosphorylated by CSF1R. Predominantly expressed in immune system, with highest levels in peripheral blood leukocytes. Expressed in spleen, thymus and lymph nodes. Expressed in T-cells as well as in monocytes, and at low level in B-cells. Also detected in placenta, prostate, skin, retina and colon.

It is found in the cytoplasm. It localises to the cell membrane. Its subcellular location is the cytoplasmic vesicle. In terms of biological role, adapter protein, which negatively regulates T-cell receptor (TCR) signaling. Inhibits T-cell antigen-receptor induced activation of nuclear factor of activated T-cells. May act by linking signaling proteins such as ZAP70 with CBL, leading to a CBL dependent degradation of signaling proteins. The protein is Src-like-adapter 2 (SLA2) of Homo sapiens (Human).